Consider the following 214-residue polypeptide: YINYKNMSHQHLLTLFNLLPVGSNISTWWNFGSMLLACLMIQIITGFFLAIHYTANINLAFSSIIHLSRDVPYGWIMQNTHAISASLFFICIYIHIARGFYYGSYLNKEVWLSGTTLLIILMATAFFGYVLPWGQMSFWAATVITNLLTAIPYLGTTLTTWLWGGFAINDPTLTRFFALHFILPFIIISMSSIHILLLHNEGSNNPLGTNSDID.

A run of 4 helical transmembrane segments spans residues 31-51 (FGSM…FLAI), 75-96 (WIMQ…YIHI), 111-131 (WLSG…GYVL), and 176-196 (FFAL…IHIL). Positions 81 and 95 each coordinate heme b. Residues H180 and H194 each contribute to the heme b site. H199 lines the a ubiquinone pocket.

Belongs to the cytochrome b family. As to quaternary structure, the cytochrome bc1 complex contains 3 respiratory subunits (MT-CYB, CYC1 and UQCRFS1), 2 core proteins (UQCRC1 and UQCRC2) and probably 6 low-molecular weight proteins. Requires heme b as cofactor.

The protein resides in the mitochondrion inner membrane. Functionally, component of the ubiquinol-cytochrome c reductase complex (complex III or cytochrome b-c1 complex) that is part of the mitochondrial respiratory chain. The b-c1 complex mediates electron transfer from ubiquinol to cytochrome c. Contributes to the generation of a proton gradient across the mitochondrial membrane that is then used for ATP synthesis. The polypeptide is Cytochrome b (MT-CYB) (Bothrops atrox (Barba amarilla)).